The following is a 70-amino-acid chain: DNA-directed RNA polymerase subunit omega (70 aa).

This sequence belongs to the RNA polymerase subunit omega family. As to quaternary structure, the RNAP catalytic core consists of 2 alpha, 1 beta, 1 beta' and 1 omega subunit. When a sigma factor is associated with the core the holoenzyme is formed, which can initiate transcription.

The catalysed reaction is RNA(n) + a ribonucleoside 5'-triphosphate = RNA(n+1) + diphosphate. Its function is as follows. Promotes RNA polymerase assembly. Latches the N- and C-terminal regions of the beta' subunit thereby facilitating its interaction with the beta and alpha subunits. The protein is DNA-directed RNA polymerase subunit omega of Methylobacillus flagellatus (strain ATCC 51484 / DSM 6875 / VKM B-1610 / KT).